The following is a 357-amino-acid chain: MSCPMSLSNPSQILLRNSELLVAKVPLFINLPEDGFIEAYTEIHKPDTIHCFNTNFIDYQAITKKHCSPTKTKNVKATFASTYQTTSCHDLVIIAFPKSKAELNFTLAMITHCINDETKIILVGEKKGGIQSAAKLTQHIFSCCQKVDAARHCLLFVGLFQPERLSDVFNLQDWFKKYQITVEGIELTIASLPGVFSQQKLDVGTALLLSNLPSKMTGKVLDFGCGAGVISCFIGKKFSGTNLSLLDVSALALTSAQESLALNGLSGNVFPSNSLSDVNEHYQHVVSNPPFHQGVKTHYQASEDFLAGINKKLNKQGNITIVANSFLRYQPIMETHIGNTRVITKDKGFTIYRAQLS.

Belongs to the methyltransferase superfamily. RsmC family. As to quaternary structure, monomer.

It is found in the cytoplasm. The catalysed reaction is guanosine(1207) in 16S rRNA + S-adenosyl-L-methionine = N(2)-methylguanosine(1207) in 16S rRNA + S-adenosyl-L-homocysteine + H(+). In terms of biological role, specifically methylates the guanine in position 1207 of 16S rRNA in the 30S particle. The polypeptide is Ribosomal RNA small subunit methyltransferase C (Colwellia psychrerythraea (strain 34H / ATCC BAA-681) (Vibrio psychroerythus)).